Here is a 490-residue protein sequence, read N- to C-terminus: AP-5 complex subunit mu-1 (490 aa).

In terms of domain architecture, MHD spans 206-476 (KPQVSISITE…LISSDYYIWN (271 aa)).

It belongs to the adaptor complexes medium subunit family. In terms of assembly, probably part of the adaptor protein complex 5 (AP-5) a tetramer composed of AP5B1, AP5M1, AP5S1 and AP5Z1.

The protein localises to the cytoplasm. It is found in the cytosol. Its subcellular location is the late endosome membrane. The protein resides in the lysosome membrane. Functionally, as part of AP-5, a probable fifth adaptor protein complex it may be involved in endosomal transport. The chain is AP-5 complex subunit mu-1 (AP5M1) from Macaca fascicularis (Crab-eating macaque).